The following is a 119-amino-acid chain: uncharacterized protein (119 aa).

This is an uncharacterized protein from Aquifex aeolicus (strain VF5).